The following is a 247-amino-acid chain: Cell division protein ZapD (247 aa).

It belongs to the ZapD family. In terms of assembly, interacts with FtsZ.

It is found in the cytoplasm. Cell division factor that enhances FtsZ-ring assembly. Directly interacts with FtsZ and promotes bundling of FtsZ protofilaments, with a reduction in FtsZ GTPase activity. This Shigella sonnei (strain Ss046) protein is Cell division protein ZapD.